The chain runs to 572 residues: Proline--tRNA ligase (572 aa).

The protein belongs to the class-II aminoacyl-tRNA synthetase family. ProS type 1 subfamily. In terms of assembly, homodimer.

Its subcellular location is the cytoplasm. It catalyses the reaction tRNA(Pro) + L-proline + ATP = L-prolyl-tRNA(Pro) + AMP + diphosphate. In terms of biological role, catalyzes the attachment of proline to tRNA(Pro) in a two-step reaction: proline is first activated by ATP to form Pro-AMP and then transferred to the acceptor end of tRNA(Pro). As ProRS can inadvertently accommodate and process non-cognate amino acids such as alanine and cysteine, to avoid such errors it has two additional distinct editing activities against alanine. One activity is designated as 'pretransfer' editing and involves the tRNA(Pro)-independent hydrolysis of activated Ala-AMP. The other activity is designated 'posttransfer' editing and involves deacylation of mischarged Ala-tRNA(Pro). The misacylated Cys-tRNA(Pro) is not edited by ProRS. The polypeptide is Proline--tRNA ligase (Escherichia coli O17:K52:H18 (strain UMN026 / ExPEC)).